Reading from the N-terminus, the 186-residue chain is Nucleoside diphosphate kinase 6 (186 aa).

Positions 19, 68, 96, 102, 116, and 126 each coordinate ATP. Catalysis depends on His129, which acts as the Pros-phosphohistidine intermediate.

Belongs to the NDK family. The cofactor is Mg(2+). Expressed at a moderately low level in many tissues. Most abundant in kidney, prostate, ovary, intestine, and spleen.

It carries out the reaction a 2'-deoxyribonucleoside 5'-diphosphate + ATP = a 2'-deoxyribonucleoside 5'-triphosphate + ADP. The enzyme catalyses a ribonucleoside 5'-diphosphate + ATP = a ribonucleoside 5'-triphosphate + ADP. Major role in the synthesis of nucleoside triphosphates other than ATP. The ATP gamma phosphate is transferred to the NDP beta phosphate via a ping-pong mechanism, using a phosphorylated active-site intermediate. Inhibitor of p53-induced apoptosis. The protein is Nucleoside diphosphate kinase 6 (NME6) of Homo sapiens (Human).